The primary structure comprises 399 residues: CCA-adding enzyme (399 aa).

G28 and R31 together coordinate ATP. CTP-binding residues include G28 and R31. Mg(2+)-binding residues include D41 and D43. ATP-binding residues include R112, D155, R158, R161, and R164. Residues R112, D155, R158, R161, and R164 each coordinate CTP.

This sequence belongs to the tRNA nucleotidyltransferase/poly(A) polymerase family. Bacterial CCA-adding enzyme type 3 subfamily. In terms of assembly, homodimer. Requires Mg(2+) as cofactor.

It carries out the reaction a tRNA precursor + 2 CTP + ATP = a tRNA with a 3' CCA end + 3 diphosphate. The enzyme catalyses a tRNA with a 3' CCA end + 2 CTP + ATP = a tRNA with a 3' CCACCA end + 3 diphosphate. Functionally, catalyzes the addition and repair of the essential 3'-terminal CCA sequence in tRNAs without using a nucleic acid template. Adds these three nucleotides in the order of C, C, and A to the tRNA nucleotide-73, using CTP and ATP as substrates and producing inorganic pyrophosphate. tRNA 3'-terminal CCA addition is required both for tRNA processing and repair. Also involved in tRNA surveillance by mediating tandem CCA addition to generate a CCACCA at the 3' terminus of unstable tRNAs. While stable tRNAs receive only 3'-terminal CCA, unstable tRNAs are marked with CCACCA and rapidly degraded. This chain is CCA-adding enzyme, found in Staphylococcus saprophyticus subsp. saprophyticus (strain ATCC 15305 / DSM 20229 / NCIMB 8711 / NCTC 7292 / S-41).